A 190-amino-acid chain; its full sequence is Shikimate kinase (190 aa).

Residue 13–18 coordinates ATP; it reads GSGKTT. Threonine 17 is a Mg(2+) binding site. The substrate site is built by aspartate 35, arginine 59, and glycine 81. Position 119 (arginine 119) interacts with ATP. Position 138 (arginine 138) interacts with substrate. Position 155 (glutamine 155) interacts with ATP.

It belongs to the shikimate kinase family. In terms of assembly, monomer. The cofactor is Mg(2+).

Its subcellular location is the cytoplasm. The catalysed reaction is shikimate + ATP = 3-phosphoshikimate + ADP + H(+). The protein operates within metabolic intermediate biosynthesis; chorismate biosynthesis; chorismate from D-erythrose 4-phosphate and phosphoenolpyruvate: step 5/7. Catalyzes the specific phosphorylation of the 3-hydroxyl group of shikimic acid using ATP as a cosubstrate. The sequence is that of Shikimate kinase from Nitrosococcus oceani (strain ATCC 19707 / BCRC 17464 / JCM 30415 / NCIMB 11848 / C-107).